The primary structure comprises 459 residues: Probable rhamnogalacturonase C (459 aa).

The signal sequence occupies residues 1–18 (MRASILPLTLFLATLAGA). N36, N64, N77, N140, and N155 each carry an N-linked (GlcNAc...) asparagine glycan. C39 and C65 are disulfide-bonded. D216 functions as the Proton donor in the catalytic mechanism. A disulfide bridge links C218 with C235. N-linked (GlcNAc...) asparagine glycans are attached at residues N236 and N251. H290 is an active-site residue. N-linked (GlcNAc...) asparagine glycosylation occurs at N315. C337 and C343 are joined by a disulfide. The N-linked (GlcNAc...) asparagine glycan is linked to N356. A disulfide bridge connects residues C365 and C374.

Belongs to the glycosyl hydrolase 28 family.

The protein resides in the secreted. In terms of biological role, pectinolytic enzymes consist of four classes of enzymes: pectine lyase, polygalacturonase, pectin methylesterase and rhamnogalacturonase. Hydrolyzes alpha-D-galacturonopyranosyl-(1,2)-alpha-L-rhamnopyranosyl linkages in the backbone of the hairy regions of pectins. The polypeptide is Probable rhamnogalacturonase C (rhgC) (Aspergillus niger (strain ATCC MYA-4892 / CBS 513.88 / FGSC A1513)).